Reading from the N-terminus, the 469-residue chain is Histone acetyltransferase ESA1 (469 aa).

A disordered region spans residues 1–26 (MALAEADLPNGKTNGKASGSEETPAP). Residues 11 to 21 (GKTNGKASGSE) show a composition bias toward polar residues. The region spanning 39–92 (LRVGCKVHVEKDGEDRVAEILSVQMRRGNLEFYVHYVEFNKRLDERIAATRVDL) is the Tudor-knot domain. A disordered region spans residues 98–163 (WPEPEKPKKP…GTTQDPDNFN (66 aa)). Residues 118–127 (EKKKNPSKKQ) show a composition bias toward basic residues. 2 stretches are compositionally biased toward polar residues: residues 130–139 (TDSAATTPGA) and 150–160 (LQVNGTTQDPD). An MYST-type HAT domain is found at 185 to 457 (ARVRNLQRIV…VNSELLKWKP (273 aa)). The C2HC MYST-type; degenerate zinc-finger motif lies at 218 to 243 (IYICDFTLCYFGSKKQFERFRSKSTL). At K285 the chain carries N6-acetyllysine; by autocatalysis. Acetyl-CoA-binding positions include 326–330 (ACILT) and 335–341 (QRHGYGR). E361 acts as the Proton donor/acceptor in catalysis. S365 contributes to the acetyl-CoA binding site.

It belongs to the MYST (SAS/MOZ) family. As to quaternary structure, component of the NuA4 histone acetyltransferase complex. In terms of processing, autoacetylation at Lys-285 is required for proper function.

The protein localises to the nucleus. Its subcellular location is the chromosome. The catalysed reaction is L-lysyl-[histone] + acetyl-CoA = N(6)-acetyl-L-lysyl-[histone] + CoA + H(+). The enzyme catalyses L-lysyl-[protein] + acetyl-CoA = N(6)-acetyl-L-lysyl-[protein] + CoA + H(+). It carries out the reaction 2-hydroxyisobutanoyl-CoA + L-lysyl-[protein] = N(6)-(2-hydroxyisobutanoyl)-L-lysyl-[protein] + CoA + H(+). It catalyses the reaction (2E)-butenoyl-CoA + L-lysyl-[protein] = N(6)-(2E)-butenoyl-L-lysyl-[protein] + CoA + H(+). Its function is as follows. Catalytic component of the NuA4 histone acetyltransferase (HAT) complex which is involved in epigenetic transcriptional activation of selected genes principally by acetylation of nucleosomal histones H4, H3, H2B, H2A and H2A variant H2A.Z. Acetylates histone H4 to form H4K5ac, H4K8ac, H4K12ac and H4K16ac, histone H3 to form H3K14ac, and histone H2A to form H2AK4ac and H2AK7ac. The NuA4 complex is involved in the DNA damage response and is required for chromosome segregation. The NuA4 complex plays a direct role in repair of DNA double-strand breaks (DSBs) through homologous recombination. Recruitment to promoters depends on H3K4me. Also acetylates non-histone proteins. In addition to protein acetyltransferase, can use different acyl-CoA substrates, such as 2-hydroxyisobutanoyl-CoA (2-hydroxyisobutyryl-CoA) or (2E)-butenoyl-CoA (crotonyl-CoA), and is able to mediate protein 2-hydroxyisobutyrylation and crotonylation, respectively. The protein is Histone acetyltransferase ESA1 (ESA1) of Yarrowia lipolytica (strain CLIB 122 / E 150) (Yeast).